We begin with the raw amino-acid sequence, 424 residues long: UPF0597 protein Shewmr7_2876 (424 aa).

This sequence belongs to the UPF0597 family.

The protein is UPF0597 protein Shewmr7_2876 of Shewanella sp. (strain MR-7).